The sequence spans 187 residues: CASP-like protein 2 (187 aa).

Topologically, residues 1–24 are cytoplasmic; sequence MKVSAVETGEISQVSAPRKGMIRG. A helical membrane pass occupies residues 25–45; the sequence is LSIMDFILRIVAAIGTLGSAL. The Extracellular portion of the chain corresponds to 46 to 72; sequence STGTTRETLPFTTQFVKFRAVFDDLPT. The chain crosses the membrane as a helical span at residues 73–93; sequence FVFFVTSNSIVCGYLVLSLAL. At 94–108 the chain is on the cytoplasmic side; that stretch reads SFFHIIRRSSAAKSR. The helical transmembrane segment at 109–129 threads the bilayer; the sequence is ILLVFLDTVMFGLLTTGAAAA. At 130-163 the chain is on the extracellular side; it reads GTIVYVSHYGNVNANWFPFCGQYNHFCERISGSL. A helical membrane pass occupies residues 164 to 184; the sequence is IGSFIAVVIFMIIILMSAVSI. The Cytoplasmic portion of the chain corresponds to 185 to 187; sequence SKH.

It belongs to the Casparian strip membrane proteins (CASP) family. Homodimer and heterodimers.

The protein resides in the cell membrane. In Lotus japonicus (Lotus corniculatus var. japonicus), this protein is CASP-like protein 2.